We begin with the raw amino-acid sequence, 372 residues long: NAD(P)H-quinone oxidoreductase subunit 1 (372 aa).

8 helical membrane passes run 27-47, 97-117, 128-148, 176-196, 204-224, 254-274, 308-328, and 347-367; these read VLWM…GVLV, FLFT…YLIV, VGAG…GLLM, LALA…IDIV, ILGW…IAAL, FALF…LVSI, ALGI…AILL, and FLLP…LTFP.

It belongs to the complex I subunit 1 family. In terms of assembly, NDH-1 is composed of at least 11 different subunits.

It localises to the cellular thylakoid membrane. It carries out the reaction a plastoquinone + NADH + (n+1) H(+)(in) = a plastoquinol + NAD(+) + n H(+)(out). It catalyses the reaction a plastoquinone + NADPH + (n+1) H(+)(in) = a plastoquinol + NADP(+) + n H(+)(out). In terms of biological role, NDH-1 shuttles electrons from an unknown electron donor, via FMN and iron-sulfur (Fe-S) centers, to quinones in the respiratory and/or the photosynthetic chain. The immediate electron acceptor for the enzyme in this species is believed to be plastoquinone. Couples the redox reaction to proton translocation, and thus conserves the redox energy in a proton gradient. The sequence is that of NAD(P)H-quinone oxidoreductase subunit 1 from Synechococcus elongatus (strain ATCC 33912 / PCC 7942 / FACHB-805) (Anacystis nidulans R2).